We begin with the raw amino-acid sequence, 462 residues long: ATP synthase subunit beta (462 aa).

Position 149–156 (149–156 (GGAGVGKT)) interacts with ATP.

Belongs to the ATPase alpha/beta chains family. F-type ATPases have 2 components, CF(1) - the catalytic core - and CF(0) - the membrane proton channel. CF(1) has five subunits: alpha(3), beta(3), gamma(1), delta(1), epsilon(1). CF(0) has three main subunits: a(1), b(2) and c(9-12). The alpha and beta chains form an alternating ring which encloses part of the gamma chain. CF(1) is attached to CF(0) by a central stalk formed by the gamma and epsilon chains, while a peripheral stalk is formed by the delta and b chains.

Its subcellular location is the cell inner membrane. The catalysed reaction is ATP + H2O + 4 H(+)(in) = ADP + phosphate + 5 H(+)(out). Its function is as follows. Produces ATP from ADP in the presence of a proton gradient across the membrane. The catalytic sites are hosted primarily by the beta subunits. This is ATP synthase subunit beta from Fusobacterium nucleatum subsp. nucleatum (strain ATCC 25586 / DSM 15643 / BCRC 10681 / CIP 101130 / JCM 8532 / KCTC 2640 / LMG 13131 / VPI 4355).